A 327-amino-acid chain; its full sequence is Delta-aminolevulinic acid dehydratase (327 aa).

The Zn(2+) site is built by Cys-119, Cys-121, and Cys-129. Lys-198 (schiff-base intermediate with substrate) is an active-site residue. The 5-aminolevulinate site is built by Arg-208 and Arg-220. Mg(2+) is bound at residue Glu-236. Catalysis depends on Lys-251, which acts as the Schiff-base intermediate with substrate. 5-aminolevulinate contacts are provided by Ser-277 and Tyr-316.

Belongs to the ALAD family. In terms of assembly, homooctamer. The cofactor is Zn(2+).

It carries out the reaction 2 5-aminolevulinate = porphobilinogen + 2 H2O + H(+). It participates in porphyrin-containing compound metabolism; protoporphyrin-IX biosynthesis; coproporphyrinogen-III from 5-aminolevulinate: step 1/4. In terms of biological role, catalyzes an early step in the biosynthesis of tetrapyrroles. Binds two molecules of 5-aminolevulinate per subunit, each at a distinct site, and catalyzes their condensation to form porphobilinogen. The chain is Delta-aminolevulinic acid dehydratase (hemB) from Synechocystis sp. (strain ATCC 27184 / PCC 6803 / Kazusa).